The chain runs to 201 residues: Small ribosomal subunit protein uS4c (201 aa).

Residues 16-43 (GALPGLTSKKPRSASDLRNQSRSGKRSQ) form a disordered region. The region spanning 89 to 169 (MRLDNILFRL…LPKHLTLHSF (81 aa)) is the S4 RNA-binding domain.

The protein belongs to the universal ribosomal protein uS4 family. As to quaternary structure, part of the 30S ribosomal subunit. Contacts protein S5. The interaction surface between S4 and S5 is involved in control of translational fidelity.

Its subcellular location is the plastid. It localises to the chloroplast. Its function is as follows. One of the primary rRNA binding proteins, it binds directly to 16S rRNA where it nucleates assembly of the body of the 30S subunit. With S5 and S12 plays an important role in translational accuracy. The sequence is that of Small ribosomal subunit protein uS4c (rps4) from Nymphaea alba (White water-lily).